A 217-amino-acid chain; its full sequence is Peroxiredoxin (217 aa).

In terms of domain architecture, Thioredoxin spans 2 to 159 (AVIGEKFPDV…VVRLVKALQT (158 aa)). Cys-46 (cysteine sulfenic acid (-SOH) intermediate) is an active-site residue. Arg-122 contacts substrate.

The protein belongs to the peroxiredoxin family. Prx6 subfamily. In terms of assembly, homodecamer. Pentamer of dimers that assemble into a ring structure.

Its subcellular location is the cytoplasm. It catalyses the reaction a hydroperoxide + [thioredoxin]-dithiol = an alcohol + [thioredoxin]-disulfide + H2O. Its function is as follows. Thiol-specific peroxidase that catalyzes the reduction of hydrogen peroxide and organic hydroperoxides to water and alcohols, respectively. Plays a role in cell protection against oxidative stress by detoxifying peroxides. This is Peroxiredoxin from Methanococcus vannielii (strain ATCC 35089 / DSM 1224 / JCM 13029 / OCM 148 / SB).